Consider the following 116-residue polypeptide: UPF0102 protein LA_2381 (116 aa).

This sequence belongs to the UPF0102 family.

The polypeptide is UPF0102 protein LA_2381 (Leptospira interrogans serogroup Icterohaemorrhagiae serovar Lai (strain 56601)).